A 433-amino-acid chain; its full sequence is Beta-agarase AgaA (433 aa).

The first 20 residues, 1–20 (MRKITSILLTCVMGCTATYA), serve as a signal peptide directing secretion. One can recognise a GH16 domain in the interval 21-295 (ADWDGVPVPA…WVRFYKPVPI (275 aa)). Glu-147 acts as the Nucleophile in catalysis. Residue Glu-152 is the Proton donor of the active site. In terms of domain architecture, CBM6 spans 300 to 431 (TTVELGNFHN…QWNGDEIRFV (132 aa)).

Belongs to the glycosyl hydrolase 16 family. In terms of assembly, monomer.

It localises to the periplasm. It catalyses the reaction Hydrolysis of (1-&gt;4)-beta-D-galactosidic linkages in agarose, giving the tetramer as the predominant product.. Activity is abolished by Hg(2+), Cu(2+), Pb(2+) and Zn(2+) ions, but is not affected by NaCl up to at least 1.0 M, Mg(2+), K(+) and Ca(2+). Not affected by iodoacetamide, p-chloromercuribenzoate, dithiothreitol, 2-mercaptoethanol, EDTA and sodium dodecyl sulfate. Inhibited by N-bromosuccinimide. In terms of biological role, endo-type beta-agarase, which produces neoagarotetraose (NA4) as the main final product, with a small amount of neoagarohexaose (NA6) and neoagarobiose (NA2). This is Beta-agarase AgaA from Microbulbifer thermotolerans.